A 101-amino-acid polypeptide reads, in one-letter code: Small ribosomal subunit protein uS14 (101 aa).

Belongs to the universal ribosomal protein uS14 family. Part of the 30S ribosomal subunit. Contacts proteins S3 and S10.

Its function is as follows. Binds 16S rRNA, required for the assembly of 30S particles and may also be responsible for determining the conformation of the 16S rRNA at the A site. The chain is Small ribosomal subunit protein uS14 from Shewanella amazonensis (strain ATCC BAA-1098 / SB2B).